Here is a 188-residue protein sequence, read N- to C-terminus: MARRARFSPRLHIPAARAALGPHLHFPRRRLVLRHCGVRAFVGDAIVSKKEMTNPLCAQAIVFGNGFVETYVRSLDPRLLGAYHALSRPVCERPLFAVRGWRRLFPIVARRLDAVERRTRRVLRSMCRTYTTCMSADRAAAVSHPVMRRRWFGHRATKTRRARLRRRCRNRSSKRRAERRKRFCNYCP.

As to quaternary structure, interacts with host IKBKG; this interaction inhibits host NF-kappa-B pathway activation.

It is found in the host nucleus. The protein resides in the host cytoplasm. The protein localises to the host perinuclear region. It localises to the virion. In terms of biological role, plays a role in the inhibition of the host NF-kappa-B pathway early during infection. Prevents the host RELA subunit from reaching the nucleus and activate transcription. In Capra hircus (Goat), this protein is Protein ORFV073.